A 149-amino-acid chain; its full sequence is Transcriptional repressor NrdR (149 aa).

Residues 3–34 fold into a zinc finger; it reads CPFCSENDTKVIDSRLVADGHQVRRRRQCLAC. The ATP-cone domain maps to 49 to 139; sequence PKVIKSNGNR…VYRSFEDIRE (91 aa).

Belongs to the NrdR family. The cofactor is Zn(2+).

Functionally, negatively regulates transcription of bacterial ribonucleotide reductase nrd genes and operons by binding to NrdR-boxes. This Vibrio vulnificus (strain YJ016) protein is Transcriptional repressor NrdR.